Here is a 151-residue protein sequence, read N- to C-terminus: MTKYISALGLDVGRKRVGVAGCDRTGLIATGITTVERTSFDRDVQQIQNIVNERQVQVLVVGLPYSMDGSLGFQARQVQKFTSRLAKALQLPVEYVDERLTSFQAEQMLIAENVSPSRNKGLIDRKAAALILQQWLDIRRTNAQSSVAVEY.

It belongs to the YqgF nuclease family.

It is found in the cytoplasm. In terms of biological role, could be a nuclease involved in processing of the 5'-end of pre-16S rRNA. The sequence is that of Putative pre-16S rRNA nuclease from Nostoc sp. (strain PCC 7120 / SAG 25.82 / UTEX 2576).